The chain runs to 609 residues: Protein FRIGIDA (609 aa).

Over residues 1 to 18 the composition is skewed to low complexity; sequence MSNYPPTVAAQPTTTANP. The disordered stretch occupies residues 1 to 31; sequence MSNYPPTVAAQPTTTANPLLQRHQSEQRRRE. Coiled coils occupy residues 60 to 97 and 409 to 440; these read DELA…LESN and QIKE…LMEE. Disordered regions lie at residues 454–488 and 587–609; these read RPRL…DDQD and SEER…LDPK. Positions 474-484 are enriched in basic and acidic residues; sequence YRDRSFPSQRD. Residues 594 to 609 are compositionally biased toward polar residues; the sequence is LSNQRSPRSNSSLDPK.

This sequence belongs to the Frigida family. In terms of assembly, homodimer. Component of the transcription activator complex FRI-C composed of FRI, FRL1, SUF4, FLX and FES1. Interacts (via N-terminus) with FRL1 and (via C-terminus) with FLX (via N-terminus), SUF4 (via C-terminus) and FES1 (via C-terminus). Interacts with ASHH2 and RIN1, a component of the SWR1 chromatin-remodeling complex. Interacts with CBP20, FIP1 and FIP2. In terms of tissue distribution, expressed in ovules, but not in stamens.

The protein resides in the nucleus speckle. Required for the regulation of flowering time in the late-flowering phenotype. Involved in the enrichment of a WDR5A-containing COMPASS-like complex at the 'FLOWERING LOCUS C' that trimethylates histone H3 'Lys-4', leading to FLC up-regulation and RNA levels increase. Variants with an early-flowering phenotype (Including cv. Columbia, cv. Landsberg Erecta and cv. Wassilewskija) show loss-of-function mutations of FRI. Able to delay flowering independently of FRL1 activity. Dispensable for the reactivation of FLC in early embryogenesis, but required to maintain high levels of FLC expression in later embryonic and vegetative development. Suppresses the repression of FLC by the autonomous pathway, but has no effect on the expression of the genes involved in this pathway. The sequence is that of Protein FRIGIDA from Arabidopsis thaliana (Mouse-ear cress).